The chain runs to 204 residues: Urease accessory protein UreG (204 aa).

A GTP-binding site is contributed by 12 to 19 (GPVGSGKT).

The protein belongs to the SIMIBI class G3E GTPase family. UreG subfamily. As to quaternary structure, homodimer. UreD, UreF and UreG form a complex that acts as a GTP-hydrolysis-dependent molecular chaperone, activating the urease apoprotein by helping to assemble the nickel containing metallocenter of UreC. The UreE protein probably delivers the nickel.

The protein resides in the cytoplasm. Functionally, facilitates the functional incorporation of the urease nickel metallocenter. This process requires GTP hydrolysis, probably effectuated by UreG. In Ectopseudomonas mendocina (strain ymp) (Pseudomonas mendocina), this protein is Urease accessory protein UreG.